A 48-amino-acid chain; its full sequence is MAVPDRRVSKTRAAKRRTHYSVKLAKPVKAKDGTWKLPHHINKFTKEY.

The protein belongs to the bacterial ribosomal protein bL32 family.

The polypeptide is Large ribosomal subunit protein bL32 (Helicobacter pylori (strain P12)).